The chain runs to 960 residues: Testis anion transporter 1 (960 aa).

Topologically, residues 1-93 (MQPDRSFQSF…YRFKDWLLGD (93 aa)) are cytoplasmic. Residues 94–114 (LLAGISVGLVQIPQVLMLGLL) traverse the membrane as a helical segment. Residues 115-117 (ARH) are Extracellular-facing. The chain crosses the membrane as a helical span at residues 118–138 (LIPPLNVSYAAFCASVIYGIF). A topological domain (cytoplasmic) is located at residue glycine 139. A helical transmembrane segment spans residues 140–160 (SCHQMSIGTFFLVSALAINVL). At 161–201 (RTQPFNRGHLLLGTFIQADFSNTSFYENYNRSLSSVASVTL) the chain is on the extracellular side. An N-linked (GlcNAc...) asparagine glycan is attached at asparagine 190. A run of 2 helical transmembrane segments spans residues 202 to 222 (LTGIIQLSMGMLGFGFIVAYI) and 223 to 243 (PEAAISAYLAATALHVMLSQL). At 244–268 (TCIFGIMISYNSGPIAFFYNIINYC) the chain is on the cytoplasmic side. Residues 269–289 (LGLPKANSTSILLFLTAMVAL) traverse the membrane as a helical segment. The Extracellular portion of the chain corresponds to 290-353 (RINKCIRISF…PVTPDMSNLT (64 aa)). Residues 354-374 (EVLIESFSLALVSSSLLVFLG) traverse the membrane as a helical segment. The Cytoplasmic portion of the chain corresponds to 375 to 390 (KKIASFHNYDVNSNQD). A helical transmembrane segment spans residues 391–411 (LIAIGLCNVVSSFFRSYVFTG). Topologically, residues 412-427 (AVARTIIQDKTGGRQQ) are extracellular. A helical transmembrane segment spans residues 428 to 448 (FASLVGAGIMLLLMMKMARFF). Over 449–453 (YRLPN) the chain is Cytoplasmic. Residues 454-474 (AIVAGIILSNVLPYLEAVYTL) form a helical membrane-spanning segment. Residues 475–494 (PSLWRQNQYDCLIWMVTFMS) lie on the Extracellular side of the membrane. The helical transmembrane segment at 495-515 (AILLGLDIGLVVAVTFAFFII) threads the bilayer. Topologically, residues 516–960 (TVQSHRTKIL…ADTSEDALEI (445 aa)) are cytoplasmic. In terms of domain architecture, STAS spans 541–792 (DYREVANIPG…LTLHDAVLFA (252 aa)). Residues 662–957 (ITSSSSQRNP…TSKADTSEDA (296 aa)) are interaction with RACGAP1. Disordered regions lie at residues 807 to 857 (ESET…EESD) and 881 to 960 (EVEP…ALEI). The span at 818–827 (ETDKKEESRH) shows a compositional bias: basic and acidic residues. Over residues 884-904 (PESELEPESELDQETELEPEP) the composition is skewed to acidic residues. A compositionally biased stretch (polar residues) spans 926 to 935 (SPTQTQARTQ).

This sequence belongs to the SLC26A/SulP transporter (TC 2.A.53) family. In terms of assembly, interacts with RACGAP1. Interacts with CFTR; stimulates anion transport activity of CFTR. In terms of processing, N-glycosylated.

It is found in the membrane. It carries out the reaction sulfate(out) + chloride(in) = sulfate(in) + chloride(out). The catalysed reaction is oxalate(in) + chloride(out) = oxalate(out) + chloride(in). Functionally, antiporter that mediates the exchange of sulfate and oxalate against chloride ions across a membrane. Stimulates anion transport activity of CFTR. May cooperate with CFTR in the regulation of chloride and bicarbonate ions fluxes required for activation of the ADCY10/PKA pathway during sperm motility and sperm capacitation. May play a role in sperm tail differentiation and motility and hence male fertility. The sequence is that of Testis anion transporter 1 from Bos taurus (Bovine).